The sequence spans 27 residues: Kunitz-type serine protease inhibitor 3 (27 aa).

Residues 1 to 27 (EVHNFACLGKPDPGGCAHYIYRRYYYV) form the BPTI/Kunitz inhibitor domain.

The protein resides in the secreted. In terms of biological role, inhibits bovine trypsin and human neutrophil elastase. This is Kunitz-type serine protease inhibitor 3 from Rhipicephalus microplus (Cattle tick).